Here is a 545-residue protein sequence, read N- to C-terminus: Reticulon-2 (545 aa).

Disordered regions lie at residues 1–183 and 199–250; these read MGQV…ETGE and SPEV…EREP. A compositionally biased stretch (low complexity) spans 14-25; sequence APSTASSTPDST. Over residues 32–43 the composition is skewed to basic and acidic residues; the sequence is SDFRELHTAREF. Serine 44 carries the post-translational modification Phosphoserine. Basic and acidic residues predominate over residues 135–146; that stretch reads RPLEDLRLRLDH. Residues 157–166 show a composition bias toward low complexity; that stretch reads GEDSSTSSST. The span at 199–230 shows a compositional bias: polar residues; the sequence is SPEVLTPQLSPGSGTPQAGTPSPSRSRDSNSG. Phosphoserine occurs at positions 227 and 229. Residues 345–545 enclose the Reticulon domain; the sequence is VADLLYWKDT…AVSGSKAKAE (201 aa). 2 helical membrane-spanning segments follow: residues 368–388 and 463–483; these read LLCL…LLLL and LLFY…LLIL.

As to quaternary structure, interacts with isoform 1 but not isoform 3 of SPAST. Interacts with BACE1. Interacts (via first transmembrane domain) with ARL6IP5/GTRAP3-18. Interacts (via N-terminus) with SLC1A1/EAAC1; the interaction promotes cell surface expression of SLC1A1. In terms of assembly, interacts with TMEM33. As to expression, highly expressed in skeletal muscle.

It is found in the endoplasmic reticulum membrane. The protein localises to the sarcoplasmic reticulum membrane. The protein resides in the cell membrane. It localises to the sarcolemma. Its subcellular location is the T-tubule. It is found in the cytoplasm. The protein localises to the myofibril. The protein resides in the sarcomere. It localises to the z line. Its subcellular location is the cytoskeleton. Functionally, inhibits amyloid precursor protein processing, probably by blocking BACE1 activity. Enhances trafficking of the glutamate transporter SLC1A1/EAAC1 from the endoplasmic reticulum to the cell surface. Plays a role in the translocation of SLC2A4/GLUT4 from intracellular membranes to the cell membrane which facilitates the uptake of glucose into the cell. The sequence is that of Reticulon-2 (RTN2) from Homo sapiens (Human).